The chain runs to 952 residues: Inter-alpha-trypsin inhibitor heavy chain H5 (952 aa).

Residues Met1–Ser17 form the signal peptide. One can recognise a VIT domain in the interval Val35–Glu161. N-linked (GlcNAc...) asparagine glycans are attached at residues Asn97, Asn127, Asn136, and Asn231. The segment covering Gln113–Asp131 has biased composition (basic and acidic residues). A disordered region spans residues Gln113–Ser138. In terms of domain architecture, VWFA spans Asn295 to Ile478. Residues Asn508, Asn776, Asn795, and Asn862 are each glycosylated (N-linked (GlcNAc...) asparagine). Residues Ala933–Val952 are disordered. Over residues Arg940–Val952 the composition is skewed to basic and acidic residues.

The protein belongs to the ITIH family.

Its subcellular location is the secreted. In terms of biological role, may act as a tumor suppressor. The chain is Inter-alpha-trypsin inhibitor heavy chain H5 (Itih5) from Mus musculus (Mouse).